The chain runs to 817 residues: DNA replication licensing factor Mcm6 (817 aa).

The C4-type zinc finger occupies 152–179 (CLDCQTEIRNVEQQFKFTNPTICRNPVC). One can recognise an MCM domain in the interval 338–544 (LYQNLISSLF…VVDYAIARKI (207 aa)). ATP contacts are provided by Ser391, Thr392, Ala393, Lys394, Ser395, and Asn496. The Arginine finger signature appears at 520–523 (SRFD). ADP-binding residues include Arg611 and Glu614.

This sequence belongs to the MCM family. In terms of assembly, component of the Mcm2-7 complex. The complex forms a toroidal hexameric ring with the proposed subunit order Mcm2-Mcm6-Mcm4-Mcm7-Mcm3-Mcm5. The heterodimers of Mcm4/Mcm6 and Mcm3/Mcm5 interact with Mcm2 and Mcm7. In stage 12 embryos, strongly expressed in the CNS and weakly in the gut.

It localises to the nucleus. The catalysed reaction is ATP + H2O = ADP + phosphate + H(+). In terms of biological role, acts as a component of the Mcm2-7 complex (Mcm complex) which is the putative replicative helicase essential for 'once per cell cycle' DNA replication initiation and elongation in eukaryotic cells. Core component of CDC45-MCM-GINS (CMG) helicase, the molecular machine that unwinds template DNA during replication, and around which the replisome is built. The active ATPase sites in the Mcm2-7 ring are formed through the interaction surfaces of two neighboring subunits such that a critical structure of a conserved arginine finger motif is provided in trans relative to the ATP-binding site of the Walker A box of the adjacent subunit. The six ATPase active sites, however, are likely to contribute differentially to the complex helicase activity Required for DNA replication and cell proliferation. Required for mitotic cycles, endocycles, and the special S phase associated with the amplification of chorion genes; has a role in origin unwinding or fork elongation at chorion loci. This is DNA replication licensing factor Mcm6 from Drosophila melanogaster (Fruit fly).